A 215-amino-acid chain; its full sequence is Glutaredoxin 2 (215 aa).

A GST N-terminal domain is found at 1–77; it reads MKLYIYDHCP…YVDKLDGKPL (77 aa). An intrachain disulfide couples Cys-9 to Cys-12.

This sequence belongs to the glutaredoxin family.

Its function is as follows. Involved in reducing some disulfides in a coupled system with glutathione reductase. Does not act as hydrogen donor for ribonucleotide reductase. The sequence is that of Glutaredoxin 2 (grxB) from Escherichia coli O157:H7.